Reading from the N-terminus, the 34-residue chain is RQRRRRIKARRRIKRWRRRRIERRRWIEHATADR.

The sequence is that of Unknown protein 5 from Pseudotsuga menziesii (Douglas-fir).